Reading from the N-terminus, the 496-residue chain is UDP-N-acetylmuramoylalanine--D-glutamate ligase (496 aa).

130-136 contacts ATP; the sequence is GTNGKTT.

The protein belongs to the MurCDEF family.

Its subcellular location is the cytoplasm. The catalysed reaction is UDP-N-acetyl-alpha-D-muramoyl-L-alanine + D-glutamate + ATP = UDP-N-acetyl-alpha-D-muramoyl-L-alanyl-D-glutamate + ADP + phosphate + H(+). It participates in cell wall biogenesis; peptidoglycan biosynthesis. Functionally, cell wall formation. Catalyzes the addition of glutamate to the nucleotide precursor UDP-N-acetylmuramoyl-L-alanine (UMA). This chain is UDP-N-acetylmuramoylalanine--D-glutamate ligase (murD), found in Mycobacterium tuberculosis (strain CDC 1551 / Oshkosh).